We begin with the raw amino-acid sequence, 302 residues long: Quinolinate synthase (302 aa).

Positions 24 and 41 each coordinate iminosuccinate. Residue C86 participates in [4Fe-4S] cluster binding. Iminosuccinate is bound by residues 112-114 (YVN) and S129. Residue C173 coordinates [4Fe-4S] cluster. Residues 199–201 (HPE) and T216 contribute to the iminosuccinate site. C259 contacts [4Fe-4S] cluster.

It belongs to the quinolinate synthase family. Type 2 subfamily. [4Fe-4S] cluster is required as a cofactor.

The protein localises to the cytoplasm. The catalysed reaction is iminosuccinate + dihydroxyacetone phosphate = quinolinate + phosphate + 2 H2O + H(+). The protein operates within cofactor biosynthesis; NAD(+) biosynthesis; quinolinate from iminoaspartate: step 1/1. Its function is as follows. Catalyzes the condensation of iminoaspartate with dihydroxyacetone phosphate to form quinolinate. This chain is Quinolinate synthase, found in Thermococcus kodakarensis (strain ATCC BAA-918 / JCM 12380 / KOD1) (Pyrococcus kodakaraensis (strain KOD1)).